Here is a 253-residue protein sequence, read N- to C-terminus: Ribonuclease HII (253 aa).

Positions 70 to 253 (NLIAGIDEVG…KSFEPIKSML (184 aa)) constitute an RNase H type-2 domain. The a divalent metal cation site is built by Asp-76, Glu-77, and Asp-168.

It belongs to the RNase HII family. Requires Mn(2+) as cofactor. Mg(2+) serves as cofactor.

The protein resides in the cytoplasm. The catalysed reaction is Endonucleolytic cleavage to 5'-phosphomonoester.. In terms of biological role, endonuclease that specifically degrades the RNA of RNA-DNA hybrids. This is Ribonuclease HII from Streptococcus agalactiae serotype III (strain NEM316).